The chain runs to 145 residues: MKLHELSPSEGSRKKRKRVGRGPGSGMGGTSTRGNKGHNQRSGGGTRPGFEGGQMPLHRRLPKRGFKNILAKSILIVNLSDLDRFEDKAVIDVAALKQTGLIKGMFDKVKILGDGEVSKAFTFKQCLVSKTARQKIEAAGGSIEL.

The interval 1-58 (MKLHELSPSEGSRKKRKRVGRGPGSGMGGTSTRGNKGHNQRSGGGTRPGFEGGQMPLH) is disordered. 2 stretches are compositionally biased toward gly residues: residues 21 to 31 (RGPGSGMGGTS) and 42 to 52 (SGGGTRPGFEG).

The protein belongs to the universal ribosomal protein uL15 family. In terms of assembly, part of the 50S ribosomal subunit.

Its function is as follows. Binds to the 23S rRNA. In Desulforapulum autotrophicum (strain ATCC 43914 / DSM 3382 / VKM B-1955 / HRM2) (Desulfobacterium autotrophicum), this protein is Large ribosomal subunit protein uL15.